The chain runs to 122 residues: Large ribosomal subunit protein uL14c (122 aa).

Belongs to the universal ribosomal protein uL14 family. In terms of assembly, part of the 50S ribosomal subunit.

Its subcellular location is the plastid. It is found in the chloroplast. In terms of biological role, binds to 23S rRNA. This Carica papaya (Papaya) protein is Large ribosomal subunit protein uL14c.